Here is a 425-residue protein sequence, read N- to C-terminus: Riboflavin biosynthesis protein RibBA (425 aa).

The DHBP synthase stretch occupies residues 1 to 204 (MTRLDSVERA…IADLIEWRRK (204 aa)). Residues 28–29 (RE), Asp33, 141–145 (RPGHT), and Glu165 contribute to the D-ribulose 5-phosphate site. Glu29 contacts Mg(2+). Residue His144 participates in Mg(2+) binding. A GTP cyclohydrolase II region spans residues 205-425 (HEKHIERVAE…HLPGEFGGAL (221 aa)). 259-263 (RVHSE) contributes to the GTP binding site. Zn(2+) is bound by residues Cys264, Cys275, and Cys277. GTP-binding positions include Gln280, 303–305 (EGR), and Thr325. Asp337 acts as the Proton acceptor; for GTP cyclohydrolase activity in catalysis. Arg339 functions as the Nucleophile; for GTP cyclohydrolase activity in the catalytic mechanism. GTP contacts are provided by Thr360 and Lys365.

In the N-terminal section; belongs to the DHBP synthase family. This sequence in the C-terminal section; belongs to the GTP cyclohydrolase II family. Requires Mg(2+) as cofactor. The cofactor is Mn(2+). Zn(2+) is required as a cofactor.

It carries out the reaction D-ribulose 5-phosphate = (2S)-2-hydroxy-3-oxobutyl phosphate + formate + H(+). It catalyses the reaction GTP + 4 H2O = 2,5-diamino-6-hydroxy-4-(5-phosphoribosylamino)-pyrimidine + formate + 2 phosphate + 3 H(+). It functions in the pathway cofactor biosynthesis; riboflavin biosynthesis; 2-hydroxy-3-oxobutyl phosphate from D-ribulose 5-phosphate: step 1/1. The protein operates within cofactor biosynthesis; riboflavin biosynthesis; 5-amino-6-(D-ribitylamino)uracil from GTP: step 1/4. Its function is as follows. Catalyzes the conversion of D-ribulose 5-phosphate to formate and 3,4-dihydroxy-2-butanone 4-phosphate. Catalyzes the conversion of GTP to 2,5-diamino-6-ribosylamino-4(3H)-pyrimidinone 5'-phosphate (DARP), formate and pyrophosphate. In Mycobacterium ulcerans (strain Agy99), this protein is Riboflavin biosynthesis protein RibBA.